The primary structure comprises 95 residues: UPF0358 protein BA_4159/GBAA_4159/BAS3861 (95 aa).

This sequence belongs to the UPF0358 family.

The protein is UPF0358 protein BA_4159/GBAA_4159/BAS3861 of Bacillus anthracis.